We begin with the raw amino-acid sequence, 509 residues long: MDIRAAEISAILKEQIKNFGKEAEVSEVGQVLFVGDGIARVYGLDNVQAGEMVEFPGGIRGMALNLESDNVGVVIFGADRDIKEGDVVKRTGAIVDVPVGPELLGRVVDALGNPIDGKGPIKAKERRRVDVKAPGIIPRKSVHEPMSTGLKAIDALIPVGRGQRELVIGDRQTGKTAIILDTFLNQKPIHDNGPDKDKLYCVYVAVGQKRSTVAQFVKVLEERGALEYSIVVAATASDPAPMQYLAPFAGCAMGEYFRDNGQHALIGYDDLSKQAVAYRQMSLLLRRPPGREAYPGDVFYLHSRLLERAAKLNDENGAGSLTALPVIETQGNDVSAFIPTNVISITDGQIFLETNLFYQGIRPAVNVGLSVSRVGSSAQIKAMKQVAGSIKGELAQYREMAAFAQFGSDLDAATQRLLNRGARLTELLKQPQFSPLKTEEQVAVIYAGVNGYLDKLAVNQVGKFEEGLLASLRTEHKDVLEGIRNEKALTDDLKAKLKAAIDAFAKSFA.

169–176 is a binding site for ATP; the sequence is GDRQTGKT.

Belongs to the ATPase alpha/beta chains family. In terms of assembly, F-type ATPases have 2 components, CF(1) - the catalytic core - and CF(0) - the membrane proton channel. CF(1) has five subunits: alpha(3), beta(3), gamma(1), delta(1), epsilon(1). CF(0) has three main subunits: a(1), b(2) and c(9-12). The alpha and beta chains form an alternating ring which encloses part of the gamma chain. CF(1) is attached to CF(0) by a central stalk formed by the gamma and epsilon chains, while a peripheral stalk is formed by the delta and b chains.

The protein resides in the cell inner membrane. The catalysed reaction is ATP + H2O + 4 H(+)(in) = ADP + phosphate + 5 H(+)(out). Produces ATP from ADP in the presence of a proton gradient across the membrane. The alpha chain is a regulatory subunit. The protein is ATP synthase subunit alpha of Brucella ovis (strain ATCC 25840 / 63/290 / NCTC 10512).